A 234-amino-acid chain; its full sequence is Phosphoribosylaminoimidazole-succinocarboxamide synthase (234 aa).

It belongs to the SAICAR synthetase family.

The catalysed reaction is 5-amino-1-(5-phospho-D-ribosyl)imidazole-4-carboxylate + L-aspartate + ATP = (2S)-2-[5-amino-1-(5-phospho-beta-D-ribosyl)imidazole-4-carboxamido]succinate + ADP + phosphate + 2 H(+). Its pathway is purine metabolism; IMP biosynthesis via de novo pathway; 5-amino-1-(5-phospho-D-ribosyl)imidazole-4-carboxamide from 5-amino-1-(5-phospho-D-ribosyl)imidazole-4-carboxylate: step 1/2. This chain is Phosphoribosylaminoimidazole-succinocarboxamide synthase, found in Staphylococcus epidermidis (strain ATCC 35984 / DSM 28319 / BCRC 17069 / CCUG 31568 / BM 3577 / RP62A).